Reading from the N-terminus, the 444-residue chain is Glutamyl-tRNA(Gln) amidotransferase subunit D (444 aa).

Residues 92–424 (SEIKIISTGG…EKIQNLMITN (333 aa)) form the Asparaginase/glutaminase domain. Catalysis depends on residues Thr-102, Thr-178, Asp-179, and Lys-257.

It belongs to the asparaginase 1 family. GatD subfamily. In terms of assembly, heterodimer of GatD and GatE.

It catalyses the reaction L-glutamyl-tRNA(Gln) + L-glutamine + ATP + H2O = L-glutaminyl-tRNA(Gln) + L-glutamate + ADP + phosphate + H(+). In terms of biological role, allows the formation of correctly charged Gln-tRNA(Gln) through the transamidation of misacylated Glu-tRNA(Gln) in organisms which lack glutaminyl-tRNA synthetase. The reaction takes place in the presence of glutamine and ATP through an activated gamma-phospho-Glu-tRNA(Gln). The GatDE system is specific for glutamate and does not act on aspartate. The protein is Glutamyl-tRNA(Gln) amidotransferase subunit D of Saccharolobus solfataricus (strain ATCC 35092 / DSM 1617 / JCM 11322 / P2) (Sulfolobus solfataricus).